The sequence spans 508 residues: Lysine--tRNA ligase (508 aa).

Positions 418 and 425 each coordinate Mg(2+).

It belongs to the class-II aminoacyl-tRNA synthetase family. In terms of assembly, homodimer. Requires Mg(2+) as cofactor.

The protein localises to the cytoplasm. It catalyses the reaction tRNA(Lys) + L-lysine + ATP = L-lysyl-tRNA(Lys) + AMP + diphosphate. In Burkholderia pseudomallei (strain 668), this protein is Lysine--tRNA ligase.